We begin with the raw amino-acid sequence, 694 residues long: Transcription activator of gluconeogenesis PTRG_06536 (694 aa).

The segment at 1 to 57 (MTTPDAEDASPSPEYRSDQDDDMAAEQTTDRQSGDASPTQKPANGKPNAKDPLRPRR) is disordered. A DNA-binding region (zn(2)-C6 fungal-type) is located at residues 64-92 (CFACQRAHLTCGDERPCGRCIKRGLQDHC). 4 disordered regions span residues 175-216 (FSNQ…FGPL), 289-369 (AMAF…GDNP), 384-420 (AQRSPLVSRPQQENRPPTTALQSIHANGIRKRQRDTK), and 539-569 (VNLGTNRESSESDTSTQNTTPNLSAQDSEGA). Positions 193–204 (SVQNAGAPSTMS) are enriched in polar residues. The span at 205–214 (QGQQGMQQFG) shows a compositional bias: low complexity. The span at 302–324 (WQETQSRQGSMHVHTPNNTSGSG) shows a compositional bias: polar residues. Residues 349–363 (ATHSTASPASTDAST) show a composition bias toward low complexity. The segment covering 392-408 (RPQQENRPPTTALQSIH) has biased composition (polar residues). The region spanning 485–559 (LQRHLMTLQE…SDTSTQNTTP (75 aa)) is the PAS domain.

It belongs to the ERT1/acuK family.

The protein localises to the nucleus. Transcription factor which regulates nonfermentable carbon utilization. Activator of gluconeogenetic genes. This Pyrenophora tritici-repentis (strain Pt-1C-BFP) (Wheat tan spot fungus) protein is Transcription activator of gluconeogenesis PTRG_06536.